The following is a 314-amino-acid chain: Homoserine kinase (314 aa).

An ATP-binding site is contributed by 95–105; the sequence is PHSRGLGSSAS.

The protein belongs to the GHMP kinase family. Homoserine kinase subfamily.

The protein localises to the cytoplasm. The catalysed reaction is L-homoserine + ATP = O-phospho-L-homoserine + ADP + H(+). Its pathway is amino-acid biosynthesis; L-threonine biosynthesis; L-threonine from L-aspartate: step 4/5. Its function is as follows. Catalyzes the ATP-dependent phosphorylation of L-homoserine to L-homoserine phosphate. This Rhodococcus erythropolis (strain PR4 / NBRC 100887) protein is Homoserine kinase.